Consider the following 188-residue polypeptide: Succinate dehydrogenase [ubiquinone] cytochrome b large subunit, mitochondrial (188 aa).

A mitochondrion-targeting transit peptide spans 1–31 (MSLLPYNATLCRVLRHNVKFIRSVQTSAARV). Residues 32-69 (SAEKTPIQVWGWDYLMRQRALKRPIAPHLTIYKPQMTW) lie on the Mitochondrial matrix side of the membrane. Residues 70 to 95 (MVSGLHRVTGCAMAGTLLIGGVGFSV) traverse the membrane as a helical segment. Positions 72 and 76 each coordinate a rhodoquinol. A ubiquinone-binding residues include Ser72 and Arg76. The Mitochondrial intermembrane portion of the chain corresponds to 96–113 (LPLDFTTFVEFIRGLGIP). Residues 114–140 (WVILDTFKFIIAFPIAFHTLNGIRFIG) form a helical membrane-spanning segment. His131 is a heme b binding site. At 141–153 (FDMAKGTDIPSIY) the chain is on the mitochondrial matrix side. The helical transmembrane segment at 154–176 (RGAYLVLGLAALISLAVVVYPRW) threads the bilayer. Over 177–188 (ERHKKATLPTNH) the chain is Mitochondrial intermembrane.

This sequence belongs to the cytochrome b558 family. Component of the mitochondrial electron transport chain complex II composed of four subunits: a flavoprotein (Fp), an iron-sulfur protein (Ip), and a large cytochrome b (CybL) subunit and a small cytochrome b (CybS) subunit. There are 2 developmental stage-specific forms of complex II which have the Ip and CybL subunits in common. Complex II from the free-living larvae (aerobic environment) acts as a succinate dehydrogenase and is composed of the common subunit Ip and CybL and the stage specific subunits FpL and CybSL. Complex II from parasitic larvae and adults (anaerobic environment) acts as a fumarate reductase and is composed of the common subunit Ip and CybL and the stage specific subunits FpA and CybSA. The cofactor is heme b. In terms of tissue distribution, expressed in adult muscles (at protein level).

The protein localises to the mitochondrion inner membrane. It participates in carbohydrate metabolism; tricarboxylic acid cycle; fumarate from succinate (eukaryal route): step 1/1. Membrane-bound large subunit (CybL) of the mitochondrial electron transport chain complex II, which together with the membrane-bound small subunit (CybS), anchor the catalytic subunits to the inner mitochondria membrane. During the free-living egg-larvae stages, which occur in an aerobic environment, complex II acts as a succinate dehydrogenase by transferring electrons from succinate to ubiquinone. During the parasitic larvae and adult stages, which occur in an anaerobic environment, complex II acts as a fumarate reductase by transferring electrons from rhodoquinol to fumarate. This chain is Succinate dehydrogenase [ubiquinone] cytochrome b large subunit, mitochondrial, found in Ascaris suum (Pig roundworm).